A 511-amino-acid chain; its full sequence is Neuronal acetylcholine receptor subunit alpha-2 (511 aa).

The first 27 residues, 1–27, serve as a signal peptide directing secretion; the sequence is MTLSHSALQFWTHLYLWCLLLVPAVLT. The Extracellular segment spans residues 28–241; it reads QQGSHTHAED…VTYYFVIRRL (214 aa). N-linked (GlcNAc...) asparagine glycans are attached at residues Asn-56 and Asn-106. Cysteines 160 and 174 form a disulfide. Asn-212 is a glycosylation site (N-linked (GlcNAc...) asparagine). The cysteines at positions 224 and 225 are disulfide-linked. The next 3 helical transmembrane spans lie at 242 to 266, 274 to 292, and 308 to 329; these read PLFY…VFYL, ITLC…LLIT, and YLLF…VLNV. At 330–484 the chain is on the cytoplasmic side; it reads HHRSPSTHNM…WKYVAMVVDR (155 aa). Residues 485–503 form a helical membrane-spanning segment; the sequence is IFLWLFIIVCFLGTIGLFL.

The protein belongs to the ligand-gated ion channel (TC 1.A.9) family. Acetylcholine receptor (TC 1.A.9.1) subfamily. Alpha-2/CHRNA2 sub-subfamily. As to quaternary structure, neuronal AChR seems to be composed of two different types of subunits: alpha and non-alpha (beta). CHRNA2/Alpha-2 subunit can be combined to CHRNB2/beta-2 or CHRNB4/beta-4 to give rise to functional receptors. The alpha-2:beta-2 nAChR complex is proposed to be a heteropentamer with two subtypes: LS (low agonist sensitivity) with a (alpha-2)3:(beta-2)2 and HS (high agonist sensitivity) with a (alpha-2)2:(beta-2)3 stoichiometry; the subtypes differ in their subunit binding interfaces which are involved in ligand binding.

It is found in the synaptic cell membrane. Its subcellular location is the cell membrane. It carries out the reaction Ca(2+)(in) = Ca(2+)(out). The enzyme catalyses K(+)(in) = K(+)(out). It catalyses the reaction Na(+)(in) = Na(+)(out). Component of neuronal acetylcholine receptors (nAChRs) that function as pentameric, ligand-gated cation channels with high calcium permeability among other activities. nAChRs are excitatory neurotrasnmitter receptors formed by a collection of nAChR subunits known to mediate synaptic transmission in the nervous system and the neuromuscular junction. Each nAchR subunit confers differential attributes to channel properties, including activation, deactivation and desensitization kinetics, pH sensitivity, cation permeability, and binding to allosteric modulators. CHRNA2 forms heteropentameric neuronal acetylcholine receptors with CHRNB2 and CHRNB4 and plays a role in nicotine dependence. The sequence is that of Neuronal acetylcholine receptor subunit alpha-2 (Chrna2) from Rattus norvegicus (Rat).